The following is a 211-amino-acid chain: Redox-sensing transcriptional repressor Rex (211 aa).

The segment at residues Leu17 to Phe56 is a DNA-binding region (H-T-H motif). Gly91–Gly96 contacts NAD(+).

This sequence belongs to the transcriptional regulatory Rex family. In terms of assembly, homodimer.

It localises to the cytoplasm. Functionally, modulates transcription in response to changes in cellular NADH/NAD(+) redox state. The polypeptide is Redox-sensing transcriptional repressor Rex (Lysinibacillus sphaericus (strain C3-41)).